A 523-amino-acid chain; its full sequence is Solute carrier family 2, facilitated glucose transporter member 2 (523 aa).

At 1–10 (MSEDKITGTL) the chain is on the cytoplasmic side. The helical transmembrane segment at 11–31 (AFTVFTAVLSSFQFGYDIGVI) threads the bilayer. Topologically, residues 32-97 (NAPQEVIISH…SAHIVTMLWS (66 aa)) are extracellular. N62 is a glycosylation site (N-linked (GlcNAc...) asparagine). The chain crosses the membrane as a helical span at residues 98–118 (LSVSSFAVGGMVASFFGGWLG). The Cytoplasmic segment spans residues 119–126 (DKLGRIKA). The chain crosses the membrane as a helical span at residues 127-147 (MLAANSLSLTGALLMGCSKFG). Residues 148-157 (PAHALIIAGR) lie on the Extracellular side of the membrane. The chain crosses the membrane as a helical span at residues 158-178 (SVSGLYCGLISGLVPMYIGEI). Topologically, residues 179 to 186 (APTTLRGA) are cytoplasmic. A helical membrane pass occupies residues 187–207 (LGTLHQLALVTGILISQIAGL). Residue Q192 coordinates D-glucose. The Extracellular segment spans residues 208–216 (SFILGNQDH). The chain crosses the membrane as a helical span at residues 217-237 (WHILLGLSAVPALLQCLLLLF). Over 238-302 (CPESPRYLYI…LFTDANYRQP (65 aa)) the chain is Cytoplasmic. A helical membrane pass occupies residues 303 to 323 (ILVALMLHMAQQFSGINGIFY). D-glucose-binding positions include 313–314 (QQ) and N319. The Extracellular segment spans residues 324–337 (YSTSIFQTAGISQP). Residues 338–358 (VYATIGVGAINMIFTAVSVLL) traverse the membrane as a helical segment. N348 contributes to the D-glucose binding site. The Cytoplasmic segment spans residues 359-367 (VEKAGRRTL). A helical membrane pass occupies residues 368–388 (FLTGMIGMFFCTIFMSVGLVL). Residues 389–401 (LDKFAWMSYVSMT) lie on the Extracellular side of the membrane. Residues 402–422 (AIFLFVSFFEIGPGPIPWFMV) traverse the membrane as a helical segment. D-glucose is bound by residues E411 and W419. The Cytoplasmic portion of the chain corresponds to 423-432 (AEFFSQGPRP). Residues 433 to 453 (TALALAAFSNWVCNFVIALCF) form a helical membrane-spanning segment. The Extracellular portion of the chain corresponds to 454 to 460 (QYIADFL). The chain crosses the membrane as a helical span at residues 461 to 481 (GPYVFFLFAGVVLVFTLFTFF). Topologically, residues 482–523 (KVPETKGKSFEEIAAEFRKKSGSAPPRKAAVQMEFLASSESV) are cytoplasmic. A Phosphoserine modification is found at S522.

Belongs to the major facilitator superfamily. Sugar transporter (TC 2.A.1.1) family. Glucose transporter subfamily. N-glycosylated; required for stability and retention at the cell surface of pancreatic beta cells. As to expression, in embryo, expressed in endoderm layer of yolk sac and liver primordium.

Its subcellular location is the cell membrane. It catalyses the reaction D-glucose(out) = D-glucose(in). The catalysed reaction is D-fructose(out) = D-fructose(in). It carries out the reaction L-dehydroascorbate(out) = L-dehydroascorbate(in). The enzyme catalyses D-galactose(in) = D-galactose(out). D-glucose and maltose competitively inhibit fructose transport. D-glucose, D-fructose and maltose inhibit deoxyglucose transport. Facilitative hexose transporter that mediates the transport of glucose, fructose and galactose. Likely mediates the bidirectional transfer of glucose across the plasma membrane of hepatocytes and is responsible for uptake of glucose by the beta cells; may comprise part of the glucose-sensing mechanism of the beta cell. May also participate with the Na(+)/glucose cotransporter in the transcellular transport of glucose in the small intestine and kidney. Also able to mediate the transport of dehydroascorbate. This Mus musculus (Mouse) protein is Solute carrier family 2, facilitated glucose transporter member 2.